The following is a 239-amino-acid chain: Dephospho-CoA kinase (239 aa).

In terms of domain architecture, DPCK spans 3-206 (IIGLTGSIAS…GGEGGEPAAG (204 aa)). 11 to 16 (ASGKST) provides a ligand contact to ATP. Positions 197–239 (GGEGGEPAAGSSAHHGAGSVDPGAGPCDGPGAAPEAERRGGDR) are disordered. Over residues 204 to 230 (AAGSSAHHGAGSVDPGAGPCDGPGAAP) the composition is skewed to low complexity.

It belongs to the CoaE family.

The protein localises to the cytoplasm. It catalyses the reaction 3'-dephospho-CoA + ATP = ADP + CoA + H(+). The protein operates within cofactor biosynthesis; coenzyme A biosynthesis; CoA from (R)-pantothenate: step 5/5. Catalyzes the phosphorylation of the 3'-hydroxyl group of dephosphocoenzyme A to form coenzyme A. This Symbiobacterium thermophilum (strain DSM 24528 / JCM 14929 / IAM 14863 / T) protein is Dephospho-CoA kinase.